We begin with the raw amino-acid sequence, 471 residues long: Putative multidrug resistance protein MdtD (471 aa).

Topologically, residues 1–11 (MTDLPDSTRWQ) are periplasmic. Residues 12-32 (LWIVAFGFFMQSLDTTIVNTA) form a helical membrane-spanning segment. Over 33–48 (LPSMAQSLGESPLHMH) the chain is Cytoplasmic. Residues 49 to 69 (MVIVSYVLTVAVMLPASGWLA) form a helical membrane-spanning segment. Residues 70–76 (DKVGVRN) are Periplasmic-facing. A helical membrane pass occupies residues 77–97 (IFFTAIVLFTLGSLFCALSGT). Residues 98-101 (LNEL) are Cytoplasmic-facing. A helical membrane pass occupies residues 102-124 (LLARALQGVGGAMMVPVGRLTVM). The Periplasmic segment spans residues 125–137 (KIVPREQYMAAMT). Residues 138 to 158 (FVTLPGQVGPLLGPALGGLLV) traverse the membrane as a helical segment. Residues 159–164 (EYASWH) lie on the Cytoplasmic side of the membrane. A helical transmembrane segment spans residues 165–185 (WIFLINIPVGIIGAIATLMLM). Residues 186-196 (PNYTMQTRRFD) lie on the Periplasmic side of the membrane. The chain crosses the membrane as a helical span at residues 197–217 (LSGFLLLAVGMAVLTLALDGS). Topologically, residues 218–224 (KGTGLSP) are cytoplasmic. The chain crosses the membrane as a helical span at residues 225 to 245 (LTIDGLVAVGVVALVLYLLHA). Residues 246–262 (RNNNRALFSLKLFRTRT) lie on the Periplasmic side of the membrane. A helical membrane pass occupies residues 263–283 (FSLGLAGSFAGRIGSGMLPFM). The Cytoplasmic segment spans residues 284–285 (TP). The chain crosses the membrane as a helical span at residues 286-306 (VFLQIGLGFSPFHAGLMMIPM). Residues 307-341 (VLGSMGMKRIVVQVVNRFGYRRVLVATTLGLSLVT) lie on the Periplasmic side of the membrane. A helical membrane pass occupies residues 342 to 362 (LLFMTTALLGWYYVLPFVLFL). Topologically, residues 363 to 395 (QGMVNSTRFSSMNTLTLKDLPDNLASSGNSLLS) are cytoplasmic. Residues 396–416 (MIMQLSMSIGVTIAGLLLGLF) form a helical membrane-spanning segment. At 417 to 430 (GSQHVSIDSGTTQT) the chain is on the periplasmic side. Residues 431–451 (VFMYTWLSMALIIALPAFIFA) traverse the membrane as a helical segment. Over 452–471 (RVPNDTHQNVAISRRKRSAQ) the chain is Cytoplasmic.

Belongs to the major facilitator superfamily. TCR/Tet family.

Its subcellular location is the cell inner membrane. The sequence is that of Putative multidrug resistance protein MdtD from Escherichia coli (strain SE11).